The primary structure comprises 68 residues: Large ribosomal subunit protein uL29 (68 aa).

The protein belongs to the universal ribosomal protein uL29 family.

The chain is Large ribosomal subunit protein uL29 from Streptococcus thermophilus (strain ATCC BAA-250 / LMG 18311).